An 89-amino-acid polypeptide reads, in one-letter code: Elongation factor 1-beta (89 aa).

The protein belongs to the EF-1-beta/EF-1-delta family.

In terms of biological role, promotes the exchange of GDP for GTP in EF-1-alpha/GDP, thus allowing the regeneration of EF-1-alpha/GTP that could then be used to form the ternary complex EF-1-alpha/GTP/AAtRNA. This chain is Elongation factor 1-beta, found in Methanocella arvoryzae (strain DSM 22066 / NBRC 105507 / MRE50).